An 830-amino-acid polypeptide reads, in one-letter code: Lon protease 3 (830 aa).

Positions 19–213 constitute a Lon N-terminal domain; the sequence is VPLLPLRDII…RLIELMQAEI (195 aa). 367–374 lines the ATP pocket; that stretch reads GPPGVGKT. One can recognise a Lon proteolytic domain in the interval 604–784; sequence RDEVGLVNGL…DDVLREALIL (181 aa). Active-site residues include serine 690 and lysine 733. Residues 811 to 823 are compositionally biased toward low complexity; it reads PVKAPPAAAGEPT. A disordered region spans residues 811–830; sequence PVKAPPAAAGEPTPAAPPGA.

The protein belongs to the peptidase S16 family. In terms of assembly, homohexamer. Organized in a ring with a central cavity.

The protein localises to the cytoplasm. The enzyme catalyses Hydrolysis of proteins in presence of ATP.. Its function is as follows. ATP-dependent serine protease that mediates the selective degradation of mutant and abnormal proteins as well as certain short-lived regulatory proteins. Required for cellular homeostasis and for survival from DNA damage and developmental changes induced by stress. Degrades polypeptides processively to yield small peptide fragments that are 5 to 10 amino acids long. Binds to DNA in a double-stranded, site-specific manner. This Sorangium cellulosum (strain So ce56) (Polyangium cellulosum (strain So ce56)) protein is Lon protease 3.